A 275-amino-acid polypeptide reads, in one-letter code: MQIHTTVASLRAARARAGRVALVPTMGNLHDGHIALMRQAAGRADCVIASIFVNRLQFGPNEDFDKYPRTLQADIERLEAAGVAHLFAPDESEMYPQPQRYHVDPAPAQVSILDGEFRPGHFRGVATVVLKLLNIVQPDVALFGKKDYQQLMVLSNMVREFALPIEVLPGDTVRADDGLALSSRNGYLSAAERAEAPRLYALLCRIRDAVRAGDHDFLKLETEAMAQLEAHGWAPDYIAIRRQADLQPPVHADDPLVVLAAARLGRTRLIDNLEI.

26 to 33 (MGNLHDGH) contacts ATP. Histidine 33 (proton donor) is an active-site residue. Glutamine 57 is a (R)-pantoate binding site. Glutamine 57 contributes to the beta-alanine binding site. 144 to 147 (GKKD) provides a ligand contact to ATP. Glutamine 150 lines the (R)-pantoate pocket. ATP contacts are provided by residues valine 173 and 181-184 (LSSR).

This sequence belongs to the pantothenate synthetase family. In terms of assembly, homodimer.

The protein localises to the cytoplasm. It catalyses the reaction (R)-pantoate + beta-alanine + ATP = (R)-pantothenate + AMP + diphosphate + H(+). Its pathway is cofactor biosynthesis; (R)-pantothenate biosynthesis; (R)-pantothenate from (R)-pantoate and beta-alanine: step 1/1. Its function is as follows. Catalyzes the condensation of pantoate with beta-alanine in an ATP-dependent reaction via a pantoyl-adenylate intermediate. This Azoarcus sp. (strain BH72) protein is Pantothenate synthetase.